A 93-amino-acid chain; its full sequence is U12-lycotoxin-Ls1b (93 aa).

Residues 1–18 (MKFAVILLFSLVVLAVAS) form the signal peptide. Residues 19–38 (ESVEEVRREIDIEDLPEQQR) constitute a propeptide that is removed on maturation.

It belongs to the neurotoxin 31 family. In terms of processing, contains 5 disulfide bonds. Expressed by the venom gland.

The protein resides in the secreted. This is U12-lycotoxin-Ls1b from Lycosa singoriensis (Wolf spider).